The primary structure comprises 810 residues: LPS-assembly protein LptD (810 aa).

The first 29 residues, 1-29 (MTKWTLGYSYPIALTISLIPALTPAIVQA), serve as a signal peptide directing secretion.

It belongs to the LptD family. As to quaternary structure, component of the lipopolysaccharide transport and assembly complex. Interacts with LptE and LptA.

The protein localises to the cell outer membrane. In terms of biological role, together with LptE, is involved in the assembly of lipopolysaccharide (LPS) at the surface of the outer membrane. In Aeromonas salmonicida (strain A449), this protein is LPS-assembly protein LptD.